The chain runs to 361 residues: Glyceraldehyde-3-phosphate dehydrogenase, glycosomal (361 aa).

NAD(+)-binding positions include 13-14 (RI), Asp-39, and Arg-93. D-glyceraldehyde 3-phosphate-binding positions include 166 to 168 (SCT), Thr-198, 227 to 228 (TG), and Arg-250. Catalysis depends on Cys-167, which acts as the Nucleophile. Asn-336 serves as a coordination point for NAD(+). Positions 359-361 (SKL) match the Microbody targeting signal motif.

Belongs to the glyceraldehyde-3-phosphate dehydrogenase family. Homotetramer.

It localises to the glycosome. It carries out the reaction D-glyceraldehyde 3-phosphate + phosphate + NAD(+) = (2R)-3-phospho-glyceroyl phosphate + NADH + H(+). It participates in carbohydrate degradation; glycolysis; pyruvate from D-glyceraldehyde 3-phosphate: step 1/5. The polypeptide is Glyceraldehyde-3-phosphate dehydrogenase, glycosomal (GAPDG) (Crithidia fasciculata).